A 934-amino-acid chain; its full sequence is Bifunctional uridylyltransferase/uridylyl-removing enzyme (934 aa).

Residues 1–379 (MSAHDLKLEE…TFSRRKRKLS (379 aa)) are uridylyltransferase. The uridylyl-removing stretch occupies residues 380–736 (DDGAFISENH…AKPHAFEAVT (357 aa)). One can recognise an HD domain in the interval 496–613 (VDEHLLRCIA…IDFADTVQTM (118 aa)). 2 consecutive ACT domains span residues 737 to 818 (EITV…DMLA) and 848 to 931 (VIEV…RSPQ).

The protein belongs to the GlnD family. Mg(2+) is required as a cofactor.

It carries out the reaction [protein-PII]-L-tyrosine + UTP = [protein-PII]-uridylyl-L-tyrosine + diphosphate. The catalysed reaction is [protein-PII]-uridylyl-L-tyrosine + H2O = [protein-PII]-L-tyrosine + UMP + H(+). Uridylyltransferase (UTase) activity is inhibited by glutamine, while glutamine activates uridylyl-removing (UR) activity. Its function is as follows. Modifies, by uridylylation and deuridylylation, the PII regulatory proteins (GlnB and homologs), in response to the nitrogen status of the cell that GlnD senses through the glutamine level. Under low glutamine levels, catalyzes the conversion of the PII proteins and UTP to PII-UMP and PPi, while under higher glutamine levels, GlnD hydrolyzes PII-UMP to PII and UMP (deuridylylation). Thus, controls uridylylation state and activity of the PII proteins, and plays an important role in the regulation of nitrogen assimilation and metabolism. The chain is Bifunctional uridylyltransferase/uridylyl-removing enzyme from Brucella melitensis biotype 2 (strain ATCC 23457).